Reading from the N-terminus, the 316-residue chain is Alkaline ceramidase YPC1 (316 aa).

Residues 1-36 (MGIFRWNYPESSVPGVWGETTSTIDWCEENYVVSPY) lie on the Lumenal side of the membrane. A disulfide bridge links C27 with C219. An intramembrane segment occupies 37–57 (IAEWSNTLTNSVFILSAIYTT). Residues 58-68 (YSAYKNKLEKR) lie on the Lumenal side of the membrane. An intramembrane segment occupies 69-89 (FLLIGFGYGLVGVGSWLFHMT). Residues 90–93 (LKYR) lie on the Lumenal side of the membrane. The helical transmembrane segment at 94–114 (FQLLDELPMIYAMCIPTWSLV) threads the bilayer. Residues 115-135 (CEAKEALLNGDNHKKVPLFEQ) are Cytoplasmic-facing. Residues 136 to 156 (IFIGVIIGLAVTTASILYVIY) traverse the membrane as a helical segment. Residues 157 to 160 (KNVD) lie on the Lumenal side of the membrane. Residues 161–181 (IHQILFGVQIVVVAATAGSLT) lie within the membrane without spanning it. The Lumenal segment spans residues 182-195 (YRYVHDPLAKRNLK). Residues 196 to 216 (ASMALGAILFLSGYISWLLDI) lie within the membrane without spanning it. Topologically, residues 217–228 (HYCSFWVHVRRS) are lumenal. The helical transmembrane segment at 229–249 (ILALPLGVLLEPHGWWHILTG) threads the bilayer. Over 250 to 316 (MGIYFYIVSL…DQSIEVKKEK (67 aa)) the chain is Cytoplasmic.

Belongs to the alkaline ceramidase family.

The protein localises to the endoplasmic reticulum membrane. It catalyses the reaction N-hexanoyl-sphinganine + H2O = hexanoate + sphinganine. The enzyme catalyses sphinganine + hexadecanoate = N-hexadecanoylsphinganine + H2O. It carries out the reaction N-hexadecanoyl-(4R)-hydroxysphinganine + H2O = (4R)-hydroxysphinganine + hexadecanoate. The catalysed reaction is N-hexadecanoylsphing-4-enine + H2O = sphing-4-enine + hexadecanoate. It catalyses the reaction an N-acyl-(4R)-4-hydroxysphinganine + H2O = (4R)-hydroxysphinganine + a fatty acid. Its function is as follows. Alkaline ceramidase that hydrolyzes phytoceramide and also dihydroceramide into phytosphingosine or dihydrosphingosine. Prefers phytoceramide. Also has reverse activity as acyl-CoA-independent ceramide synthase, catalyzing synthesis of phytoceramide and dihydroceramide from palmitic acid and phytosphingosine or dihydrosphingosine. Is not responsible for the breakdown of unsaturated ceramide. Preferentially uses very long chain fatty acids (C-24 and C-26) in vivo compared to C-16 in vitro. This is Alkaline ceramidase YPC1 (YPC1) from Saccharomyces cerevisiae (strain ATCC 204508 / S288c) (Baker's yeast).